We begin with the raw amino-acid sequence, 855 residues long: Envelope glycoprotein gp150 (855 aa).

Residues 1 to 784 (MAEGFAANRQ…WIGNIPQYLK (784 aa)) lie on the Extracellular side of the membrane. Residues asparagine 220, asparagine 258, asparagine 269, asparagine 274, asparagine 298, asparagine 336, asparagine 418, asparagine 422, asparagine 448, asparagine 469, asparagine 481, asparagine 499, asparagine 518, asparagine 531, asparagine 548, and asparagine 551 are each glycosylated (N-linked (GlcNAc...) asparagine; by host). The interval 615–635 (VMLALATVLSMAGAGTGATAI) is fusion peptide. A coiled-coil region spans residues 642-692 (HQVLATHQETIEKVTEALKINNLRLVTLEHQVLVIGLKVEAMEKFLYTAFA). The interval 661-679 (INNLRLVTLEHQVLVIGLK) is immunosuppression. 4 N-linked (GlcNAc...) asparagine; by host glycosylation sites follow: asparagine 716, asparagine 720, asparagine 728, and asparagine 736. The stretch at 735-771 (YNQTKELQQKFYEIIMNIEQNNVQVKKGLQQLQEWED) forms a coiled coil. Residues 785–805 (GLLGGILGIGIGVLLLILCLP) traverse the membrane as a helical segment. The Cytoplasmic portion of the chain corresponds to 806–855 (TLVDCIRNCISKVLGYTVIAMPEIGDEEETVQMELRKNGRQCGMSEKEEE).

As to quaternary structure, the mature envelope protein (Env) consists of a trimer of SU-TM heterodimers attached by noncovalent interactions or by a labile interchain disulfide bond. In terms of processing, specific enzymatic cleavages in vivo yield mature proteins. Envelope glycoproteins are synthesized as an inactive precursor that is N-glycosylated and processed likely by host cell furin or by a furin-like protease in the Golgi to yield the mature SU and TM proteins. The cleavage site between SU and TM requires the minimal sequence [KR]-X-[KR]-R.

Its subcellular location is the virion membrane. It localises to the host cell membrane. In terms of biological role, the surface protein (SU) attaches the virus to the host cell by binding to its receptor. This interaction triggers the refolding of the transmembrane protein (TM) and is thought to activate its fusogenic potential by unmasking its fusion peptide. Fusion occurs at the host cell plasma membrane. Its function is as follows. The transmembrane protein (TM) acts as a class I viral fusion protein. Under the current model, the protein has at least 3 conformational states: pre-fusion native state, pre-hairpin intermediate state, and post-fusion hairpin state. During viral and target cell membrane fusion, the coiled coil regions (heptad repeats) assume a trimer-of-hairpins structure, positioning the fusion peptide in close proximity to the C-terminal region of the ectodomain. The formation of this structure appears to drive apposition and subsequent fusion of viral and target cell membranes. Membranes fusion leads to delivery of the nucleocapsid into the cytoplasm. The polypeptide is Envelope glycoprotein gp150 (env) (Felidae (cat family)).